The following is a 560-amino-acid chain: Proteasome-associated ATPase (560 aa).

Over residues 1–19 (MSQQHDDRRPPDTADRDLA) the composition is skewed to basic and acidic residues. The disordered stretch occupies residues 1-21 (MSQQHDDRRPPDTADRDLARQ). Positions 16–55 (RDLARQATSLAEKNERLTAALTAARAQLVEMKAQLEEVSK) form a coiled coil. 237–242 (GCGKTL) lines the ATP pocket. Residues 559 to 560 (YL) form a docks into pockets in the proteasome alpha-ring region.

Belongs to the AAA ATPase family. As to quaternary structure, homohexamer. Assembles into a hexameric ring structure that caps the 20S proteasome core. Strongly interacts with the prokaryotic ubiquitin-like protein Pup through a hydrophobic interface; the interacting region of ARC lies in its N-terminal coiled-coil domain. There is one Pup binding site per ARC hexamer ring. Upon ATP-binding, the C-terminus of ARC interacts with the alpha-rings of the proteasome core, possibly by binding to the intersubunit pockets.

It participates in protein degradation; proteasomal Pup-dependent pathway. In terms of biological role, ATPase which is responsible for recognizing, binding, unfolding and translocation of pupylated proteins into the bacterial 20S proteasome core particle. May be essential for opening the gate of the 20S proteasome via an interaction with its C-terminus, thereby allowing substrate entry and access to the site of proteolysis. Thus, the C-termini of the proteasomal ATPase may function like a 'key in a lock' to induce gate opening and therefore regulate proteolysis. The protein is Proteasome-associated ATPase of Beutenbergia cavernae (strain ATCC BAA-8 / DSM 12333 / CCUG 43141 / JCM 11478 / NBRC 16432 / NCIMB 13614 / HKI 0122).